The following is a 478-amino-acid chain: Proline--tRNA ligase (478 aa).

Belongs to the class-II aminoacyl-tRNA synthetase family. ProS type 3 subfamily. In terms of assembly, homodimer.

It is found in the cytoplasm. It carries out the reaction tRNA(Pro) + L-proline + ATP = L-prolyl-tRNA(Pro) + AMP + diphosphate. In terms of biological role, catalyzes the attachment of proline to tRNA(Pro) in a two-step reaction: proline is first activated by ATP to form Pro-AMP and then transferred to the acceptor end of tRNA(Pro). The polypeptide is Proline--tRNA ligase (Clostridium botulinum (strain ATCC 19397 / Type A)).